Reading from the N-terminus, the 39-residue chain is Photosystem II reaction center protein L (39 aa).

Residues 18 to 38 (SLYLGLLSVLVLGILFSSYFF) traverse the membrane as a helical segment.

Belongs to the PsbL family. In terms of assembly, PSII is composed of 1 copy each of membrane proteins PsbA, PsbB, PsbC, PsbD, PsbE, PsbF, PsbH, PsbI, PsbJ, PsbK, PsbL, PsbM, PsbT, PsbX, PsbY, Psb30/Ycf12, peripheral proteins PsbO, CyanoQ (PsbQ), PsbU, PsbV and a large number of cofactors. It forms dimeric complexes.

The protein resides in the cellular thylakoid membrane. Its function is as follows. One of the components of the core complex of photosystem II (PSII). PSII is a light-driven water:plastoquinone oxidoreductase that uses light energy to abstract electrons from H(2)O, generating O(2) and a proton gradient subsequently used for ATP formation. It consists of a core antenna complex that captures photons, and an electron transfer chain that converts photonic excitation into a charge separation. This subunit is found at the monomer-monomer interface and is required for correct PSII assembly and/or dimerization. The sequence is that of Photosystem II reaction center protein L from Prochlorococcus marinus subsp. pastoris (strain CCMP1986 / NIES-2087 / MED4).